We begin with the raw amino-acid sequence, 87 residues long: Large ribosomal subunit protein bL27 (87 aa).

The disordered stretch occupies residues 1-22; it reads MAHKKAGGSSRNGRDSQGQRRG.

Belongs to the bacterial ribosomal protein bL27 family.

In Nitratidesulfovibrio vulgaris (strain DP4) (Desulfovibrio vulgaris), this protein is Large ribosomal subunit protein bL27.